A 62-amino-acid chain; its full sequence is MVDYIQRPKSRFLRVKCNDCENEQIIFGSASRKITCVVCGRTLAEPTGGKSTITTHILEVLE.

Positions 17, 20, 36, and 39 each coordinate Zn(2+). The C4-type zinc-finger motif lies at 17–39 (CNDCENEQIIFGSASRKITCVVC).

This sequence belongs to the eukaryotic ribosomal protein eS27 family. Part of the 30S ribosomal subunit. Zn(2+) is required as a cofactor.

This chain is Small ribosomal subunit protein eS27, found in Methanosarcina barkeri (strain Fusaro / DSM 804).